A 587-amino-acid polypeptide reads, in one-letter code: Prolycopene isomerase 2, chloroplastic (587 aa).

A chloroplast-targeting transit peptide spans 1–50 (MLCLSLNSSSTSPPKLPLHHSFSRRGIRSWVRSPCVQRKKLGFWSSPKAV).

Belongs to the carotenoid/retinoid oxidoreductase family. CrtISO subfamily. NAD(+) serves as cofactor. NADP(+) is required as a cofactor. Requires FAD as cofactor. As to expression, up-regulated in the flower buds and flower lip tissue, while it is weakly expressed in leaves.

It localises to the plastid. The protein resides in the chloroplast membrane. The enzyme catalyses 7,7',9,9'-tetra-cis-lycopene = all-trans-lycopene. The protein operates within carotenoid biosynthesis; lycopene biosynthesis. In terms of biological role, carotene cis-trans-isomerase that converts 7,9,9'-tri-cis-neurosporene to 9'-cis-neurosporene and 7,9,9',7'-tetra-cis-lycopene (also known as prolycopene) into all-trans-lycopene. Isomerization requires redox-active components, suggesting that isomerization is achieved by a reversible redox reaction acting at specific double bonds. Isomerizes adjacent cis-double bonds at C7 and C9 pairwise into the trans-configuration, but is incapable of isomerizing single cis-double bonds at C9 and C9'. The chain is Prolycopene isomerase 2, chloroplastic (CRTISO2) from Oncidium hybrid cultivar (Orchid).